The sequence spans 247 residues: Probable transcriptional regulatory protein DVU_2259 (247 aa).

The tract at residues 1–22 is disordered; sequence MAGHSKWANIQHRKGRQDAKRG.

Belongs to the TACO1 family.

It localises to the cytoplasm. This chain is Probable transcriptional regulatory protein DVU_2259, found in Nitratidesulfovibrio vulgaris (strain ATCC 29579 / DSM 644 / CCUG 34227 / NCIMB 8303 / VKM B-1760 / Hildenborough) (Desulfovibrio vulgaris).